Reading from the N-terminus, the 384-residue chain is Magnesium transporter MRS2-I (384 aa).

Transmembrane regions (helical) follow at residues 319 to 339 (LFLS…GIFG) and 356 to 376 (WVVL…VAYA). The short motif at 339 to 341 (GMN) is the Required for magnesium transport activity element.

The protein belongs to the CorA metal ion transporter (MIT) (TC 1.A.35.5) family.

The protein localises to the membrane. Its function is as follows. Magnesium transporter that may mediate the influx of magnesium. This Oryza sativa subsp. japonica (Rice) protein is Magnesium transporter MRS2-I (MRS2-I).